The primary structure comprises 91 residues: Insertion element IS1 1 protein InsA (91 aa).

The protein belongs to the IS1 elements InsA family.

Its function is as follows. Absolutely required for transposition of IS1. This is Insertion element IS1 1 protein InsA (insA1) from Escherichia coli (strain K12).